The chain runs to 228 residues: Translation initiation factor 6 (228 aa).

Belongs to the eIF-6 family.

Its function is as follows. Binds to the 50S ribosomal subunit and prevents its association with the 30S ribosomal subunit to form the 70S initiation complex. The chain is Translation initiation factor 6 from Thermococcus onnurineus (strain NA1).